The sequence spans 107 residues: Age-related maculopathy susceptibility protein 2 (107 aa).

The segment at 1-21 (MLRLYPGPMVTEAEGKGGPEM) is disordered.

Detected in retina and placenta.

Its subcellular location is the cytoplasm. This chain is Age-related maculopathy susceptibility protein 2 (ARMS2), found in Homo sapiens (Human).